Here is a 318-residue protein sequence, read N- to C-terminus: Vomeronasal type-1 receptor A11 (318 aa).

Residues 1 to 32 (MSEILFFSPQPLFSHMMNKNSRLHTHSNIKNT) lie on the Extracellular side of the membrane. A helical transmembrane segment spans residues 33–53 (FFSEIGIGISGNSFLLLFHIL). The Cytoplasmic segment spans residues 54–65 (KFIRGHRPRLTD). Residues 66-86 (LPIGLLSLIHLLMLLLMAFIA) traverse the membrane as a helical segment. Over 87-101 (TDIFISRRGWDGIIC) the chain is Extracellular. A disulfide bridge connects residues Cys101 and Cys188. Residues 102 to 118 (KFLVYLYGVLRGLSLCT) form a helical membrane-spanning segment. The Cytoplasmic portion of the chain corresponds to 119-147 (TSMLSVLQAIILSPRSSCLAKLKHKSPHH). A helical membrane pass occupies residues 148 to 168 (ISCAIIFLSVLYMLISSHILL). Residues 169-206 (SITATPNLTMNDFLYVSQSCSLLPLSYLVQSMYSTLLA) lie on the Extracellular side of the membrane. The N-linked (GlcNAc...) asparagine glycan is linked to Asn175. Residues 207–227 (LREVFLISLMVLSTLYMVVLL) traverse the membrane as a helical segment. Residues 228-254 (CRHRKQAQHLQGTSLSPKASAEQRATQ) lie on the Cytoplasmic side of the membrane. The helical transmembrane segment at 255–275 (TILMLMTFFVLMSIFDSIVSC) threads the bilayer. Over 276–285 (SRTMFLDDPT) the chain is Extracellular. The chain crosses the membrane as a helical span at residues 286–306 (SYSIHIFVMHIYATVSPFVFM). Topologically, residues 307–318 (STEKHIVNILRG) are cytoplasmic.

It belongs to the G-protein coupled receptor 1 family.

It localises to the cell membrane. Functionally, putative pheromone receptor implicated in the regulation of social and reproductive behavior. The chain is Vomeronasal type-1 receptor A11 from Mus musculus (Mouse).